Reading from the N-terminus, the 50-residue chain is Small nuclear ribonucleoprotein Sm D2 (50 aa).

The tract at residues 1-36 (MSLLNKPKSEMTPEELQKREEEEFNTGPLSVXTQSX) is disordered. The residue at position 2 (Ser2) is an N-acetylserine. Residues Lys6 and Lys8 each participate in a glycyl lysine isopeptide (Lys-Gly) (interchain with G-Cter in SUMO2) cross-link. The span at 7–21 (PKSEMTPEELQKREE) shows a compositional bias: basic and acidic residues. Position 9 is a phosphoserine (Ser9). The residue at position 12 (Thr12) is a Phosphothreonine.

Belongs to the snRNP core protein family. In terms of assembly, core component of the spliceosomal U1, U2, U4 and U5 small nuclear ribonucleoproteins (snRNPs), the building blocks of the spliceosome. Most spliceosomal snRNPs contain a common set of Sm proteins, SNRPB, SNRPD1, SNRPD2, SNRPD3, SNRPE, SNRPF and SNRPG that assemble in a heptameric protein ring on the Sm site of the small nuclear RNA to form the core snRNP. Component of the U1 snRNP. The U1 snRNP is composed of the U1 snRNA and the 7 core Sm proteins SNRPB, SNRPD1, SNRPD2, SNRPD3, SNRPE, SNRPF and SNRPG, and at least three U1 snRNP-specific proteins SNRNP70/U1-70K, SNRPA/U1-A and SNRPC/U1-C. Component of the U4/U6-U5 tri-snRNP complex composed of the U4, U6 and U5 snRNAs and at least PRPF3, PRPF4, PRPF6, PRPF8, PRPF31, SNRNP200, TXNL4A, SNRNP40, SNRPB, SNRPD1, SNRPD2, SNRPD3, SNRPE, SNRPF, SNRPG, DDX23, CD2BP2, PPIH, SNU13, EFTUD2, SART1 and USP39, plus LSM2, LSM3, LSM4, LSM5, LSM6, LSM7 and LSM8. Component of the minor spliceosome, which splices U12-type introns. Part of the SMN-Sm complex that contains SMN1, GEMIN2/SIP1, DDX20/GEMIN3, GEMIN4, GEMIN5, GEMIN6, GEMIN7, GEMIN8, STRAP/UNRIP and the Sm proteins SNRPB, SNRPD1, SNRPD2, SNRPD3, SNRPE, SNRPF and SNRPG; catalyzes core snRNPs assembly. Forms a 6S pICln-Sm complex composed of CLNS1A/pICln, SNRPD1, SNRPD2, SNRPE, SNRPF and SNRPG; ring-like structure where CLNS1A/pICln mimics additional Sm proteins and which is unable to assemble into the core snRNP. Interacts with SMN1; the interaction is direct. Interacts with GEMIN2; the interaction is direct. Interacts with SNRPD1; the interaction is direct. Interacts with SNRPF; the interaction is direct.

It localises to the cytoplasm. Its subcellular location is the cytosol. The protein localises to the nucleus. Plays a role in pre-mRNA splicing as a core component of the spliceosomal U1, U2, U4 and U5 small nuclear ribonucleoproteins (snRNPs), the building blocks of the spliceosome. Component of both the pre-catalytic spliceosome B complex and activated spliceosome C complexes. As a component of the minor spliceosome, involved in the splicing of U12-type introns in pre-mRNAs. The chain is Small nuclear ribonucleoprotein Sm D2 (SNRPD2) from Sus scrofa (Pig).